A 240-amino-acid chain; its full sequence is Mitochondrial transcription rescue factor 1 (240 aa).

A mitochondrion-targeting transit peptide spans 1 to 83; the sequence is MAVPGVRLLT…ECYFPFSIRL (83 aa). Positions 92–127 are disordered; it reads STKKTLQKEADEEDSDEETSYPERSEQEEELESEPG. The span at 101–124 shows a compositional bias: acidic residues; it reads ADEEDSDEETSYPERSEQEEELES. Phosphoserine occurs at positions 106 and 116. An S4 RNA-binding domain is found at 142-217; that stretch reads FRYDVILKTG…LKKVYEEKTE (76 aa).

Monomer. Interacts with POLRMT. Interacts (via S4 domain) with MTRFR (via C-terminus). Associates with mitoribosomal S39 large subunit, peptidyl tRNA and nascent chain.

It is found in the mitochondrion matrix. Mitochondrial RNA-binding protein involved in mitochondrial transcription regulation. Functions as a protective factor to maintain proper mitochondrial RNA level during stress. Acts at the transcription level and its protective function depends on its RNA binding ability. Part of a mitoribosome-associated quality control pathway that prevents aberrant translation by responding to interruptions during elongation. As heterodimer with MTRF, ejects the unfinished nascent chain and peptidyl transfer RNA (tRNA), respectively, from stalled ribosomes. Recruitment of mitoribosome biogenesis factors to these quality control intermediates suggests additional roles for MTRES1 and MTRF during mitoribosome rescue. The polypeptide is Mitochondrial transcription rescue factor 1 (Mtres1) (Mus musculus (Mouse)).